The chain runs to 433 residues: 3-phosphoshikimate 1-carboxyvinyltransferase (433 aa).

3-phosphoshikimate contacts are provided by Lys23, Ser24, and Arg28. Phosphoenolpyruvate is bound at residue Lys23. The phosphoenolpyruvate site is built by Gly95 and Arg123. Ser167, Gln169, Asp317, and Lys344 together coordinate 3-phosphoshikimate. Gln169 serves as a coordination point for phosphoenolpyruvate. Catalysis depends on Asp317, which acts as the Proton acceptor. Arg348 and Arg390 together coordinate phosphoenolpyruvate.

This sequence belongs to the EPSP synthase family. As to quaternary structure, monomer.

The protein localises to the cytoplasm. It carries out the reaction 3-phosphoshikimate + phosphoenolpyruvate = 5-O-(1-carboxyvinyl)-3-phosphoshikimate + phosphate. Its pathway is metabolic intermediate biosynthesis; chorismate biosynthesis; chorismate from D-erythrose 4-phosphate and phosphoenolpyruvate: step 6/7. Functionally, catalyzes the transfer of the enolpyruvyl moiety of phosphoenolpyruvate (PEP) to the 5-hydroxyl of shikimate-3-phosphate (S3P) to produce enolpyruvyl shikimate-3-phosphate and inorganic phosphate. The protein is 3-phosphoshikimate 1-carboxyvinyltransferase of Staphylococcus epidermidis (strain ATCC 12228 / FDA PCI 1200).